A 558-amino-acid chain; its full sequence is NAD(P)H-quinone oxidoreductase chain 4 (558 aa).

15 helical membrane passes run 25–45 (FPWLSLSILFPIVGAFIVPFV), 56–76 (WFALGIALTTFLITAAAYLTG), 90–110 (VSWLPNLGLTWAVGADGLSMP), 111–131 (LILLTSFITALAVLAAWPVTF), 133–153 (PKLFFFLILAMDGGQIAVFAV), 157–177 (LLFFLAWELELLPVYLLLAIW), 189–209 (FILYTAGSSLFILLAALAMGF), 230–250 (GFELLCYAGLLIAFGVKLPIV), 264–284 (TAPVHMLLAGILLKMGGYALM), 298–318 (FAPLLVVLGVVNIIYAALTSF), 327–347 (IAYSSISHMGFVLIGIGSFSE), 353–373 (AMLQMISHGLIGASLFFLVGA), 397–417 (FALWTVCCLASLALPGMSGFV), 438–458 (IVIDGLAAIGVILTPIYLLSM), and 485–505 (VYIIGCLLVPIIGIGLYPKLM).

This sequence belongs to the complex I subunit 4 family.

Its subcellular location is the cellular thylakoid membrane. It catalyses the reaction a plastoquinone + NADH + (n+1) H(+)(in) = a plastoquinol + NAD(+) + n H(+)(out). The enzyme catalyses a plastoquinone + NADPH + (n+1) H(+)(in) = a plastoquinol + NADP(+) + n H(+)(out). Functionally, NDH-1 shuttles electrons from NAD(P)H, via FMN and iron-sulfur (Fe-S) centers, to quinones in the respiratory chain. The immediate electron acceptor for the enzyme in this species is believed to be plastoquinone. Couples the redox reaction to proton translocation (for every two electrons transferred, four hydrogen ions are translocated across the cytoplasmic membrane), and thus conserves the redox energy in a proton gradient. This Synechococcus sp. (strain CC9311) protein is NAD(P)H-quinone oxidoreductase chain 4.